A 207-amino-acid chain; its full sequence is Ras-related protein Rab-8A (207 aa).

Positions 17, 18, 19, 20, 21, 22, 23, 35, 39, and 40 each coordinate GTP. Thr-22 provides a ligand contact to Mg(2+). Short sequence motifs (switch) lie at residues 31–45 (DAFN…GIDF) and 63–80 (DTAG…YYRG). 2 residues coordinate Mg(2+): Thr-40 and Asp-63. Gly-66 is a binding site for GTP. Thr-72 bears the Phosphothreonine mark. GTP-binding residues include Asn-121, Lys-122, Asp-124, Ala-152, and Lys-153. Phosphoserine is present on residues Ser-181 and Ser-185. Residue Cys-204 is modified to Cysteine methyl ester. The S-geranylgeranyl cysteine moiety is linked to residue Cys-204. Positions 205-207 (VLL) are cleaved as a propeptide — removed in mature form.

The protein belongs to the small GTPase superfamily. Rab family. In terms of assembly, interacts (GTP-bound form) with MICALL1; regulates RAB8A association with recycling endosomes. Interacts with MICALL2; competes with RAB13 and is involved in E-cadherin endocytic recycling. Interacts (GTP-bound form) with MICAL1, MICALCL, MICAL3, EHBP1 and EHBP1L1; at least in case of MICAL1, MICALCL, MICAL3 and EHBP1L1 two molecules of RAB8A can bind to one molecule of the effector protein; ternary complexes of RAB8A, RAB13 and either MICAL1 or EHBP1L1 are possible. Interacts with EHD1. Interacts with MAP4K2 and SYTL4. Interacts with SGSM1 and SGSM3. Interacts with RABIF, RIMS2, RPH3A and RPH3A. Interacts with OPTN. Interacts with RAB3IP, RAB3IP functions as guanine exchange factor (GEF). Interacts with MYO5B. Interacts with CIMAP3. Interacts with BIRC6/bruce. Interacts with OCRL. Interacts with AHI1. Interacts with DCDC1. Interacts with LRRK2; interaction facilitates phosphorylation of Thr-72. Interacts with RAB31P, GDI1, GDI2, CHM, CHML, RABGGTA, RABGGTB, TBC1D15 and INPP5B; these interactions are dependent on Thr-72 not being phosphorylated. Interacts with RILPL1 and RILPL2; these interactions are dependent on the phosphorylation of Thr-72 by LRRK2. Interacts with DZIP1; prevents inhibition by the GDP-dissociation inhibitor GDI2. Interacts (in GDP-bound form) with RAB3IP/Rabin8, RAB3IP functions as guanine exchange factor (GEF) towards RAB8A. Interacts (in GDP-bound form) with RPGR, RPGR functions as GEF towards RAB8A. It depends on Mg(2+) as a cofactor. In terms of processing, phosphorylation of Thr-72 in the switch II region by LRRK2 prevents the association of RAB regulatory proteins, including CHM, CHML and RAB GDP dissociation inhibitors GDI1 and GDI2. Phosphorylation by LRRK2 is required for localization to stressed lysosomes.

Its subcellular location is the cell membrane. It localises to the golgi apparatus. The protein localises to the endosome membrane. It is found in the recycling endosome membrane. The protein resides in the cell projection. Its subcellular location is the cilium. It localises to the cytoplasmic vesicle. The protein localises to the phagosome membrane. It is found in the cytoplasm. The protein resides in the cytoskeleton. Its subcellular location is the microtubule organizing center. It localises to the centrosome. The protein localises to the centriole. It is found in the cilium basal body. The protein resides in the midbody. Its subcellular location is the lysosome. It carries out the reaction GTP + H2O = GDP + phosphate + H(+). Its activity is regulated as follows. Regulated by guanine nucleotide exchange factors (GEFs) such as RAB3IP/Rabin8 and RPGR which promote the exchange of bound GDP for free GTP, GTPase activating proteins (GAPs) which increase the GTP hydrolysis activity, and GDP dissociation inhibitors (GDIs) which inhibit the dissociation of the nucleotide from the GTPase. Activated in response to insulin. In terms of biological role, the small GTPases Rab are key regulators of intracellular membrane trafficking, from the formation of transport vesicles to their fusion with membranes. Rabs cycle between an inactive GDP-bound form and an active GTP-bound form that is able to recruit to membranes different sets of downstream effectors directly responsible for vesicle formation, movement, tethering and fusion. RAB8A is involved in polarized vesicular trafficking and neurotransmitter release. Together with RAB11A, RAB3IP, the exocyst complex, PARD3, PRKCI, ANXA2, CDC42 and DNMBP promotes transcytosis of PODXL to the apical membrane initiation sites (AMIS), apical surface formation and lumenogenesis. Regulates the compacted morphology of the Golgi. Together with MYO5B and RAB11A participates in epithelial cell polarization. Also involved in membrane trafficking to the cilium and ciliogenesis. Together with MICALL2, may also regulate adherens junction assembly. May play a role in insulin-induced transport to the plasma membrane of the glucose transporter GLUT4 and therefore play a role in glucose homeostasis. Involved in autophagy. Participates in the export of a subset of neosynthesized proteins through a Rab8-Rab10-Rab11-dependent endososomal export route. Targeted to and stabilized on stressed lysosomes through LRRK2 phosphorylation. Suppresses stress-induced lysosomal enlargement through EHBP1 and EHNP1L1 effector proteins. The polypeptide is Ras-related protein Rab-8A (RAB8A) (Canis lupus familiaris (Dog)).